A 390-amino-acid polypeptide reads, in one-letter code: Queuine tRNA-ribosyltransferase (390 aa).

The active-site Proton acceptor is D92. Substrate-binding positions include 92–96 (DSGGF), D146, Q195, and G222. Positions 253–259 (GVGTPED) are RNA binding. Residue D272 is the Nucleophile of the active site. Residues 277 to 281 (TRNAR) form an RNA binding; important for wobble base 34 recognition region. Zn(2+) is bound by residues C310, C312, C315, and H354.

Belongs to the queuine tRNA-ribosyltransferase family. In terms of assembly, homodimer. Within each dimer, one monomer is responsible for RNA recognition and catalysis, while the other monomer binds to the replacement base PreQ1. Zn(2+) serves as cofactor.

It catalyses the reaction 7-aminomethyl-7-carbaguanine + guanosine(34) in tRNA = 7-aminomethyl-7-carbaguanosine(34) in tRNA + guanine. Its pathway is tRNA modification; tRNA-queuosine biosynthesis. Its function is as follows. Catalyzes the base-exchange of a guanine (G) residue with the queuine precursor 7-aminomethyl-7-deazaguanine (PreQ1) at position 34 (anticodon wobble position) in tRNAs with GU(N) anticodons (tRNA-Asp, -Asn, -His and -Tyr). Catalysis occurs through a double-displacement mechanism. The nucleophile active site attacks the C1' of nucleotide 34 to detach the guanine base from the RNA, forming a covalent enzyme-RNA intermediate. The proton acceptor active site deprotonates the incoming PreQ1, allowing a nucleophilic attack on the C1' of the ribose to form the product. After dissociation, two additional enzymatic reactions on the tRNA convert PreQ1 to queuine (Q), resulting in the hypermodified nucleoside queuosine (7-(((4,5-cis-dihydroxy-2-cyclopenten-1-yl)amino)methyl)-7-deazaguanosine). The protein is Queuine tRNA-ribosyltransferase of Acidovorax sp. (strain JS42).